A 185-amino-acid chain; its full sequence is Transcription factor bHLH109 (185 aa).

The region spanning 67–117 (RSMEYRMMMEKKRRKEIKDKVDILQGLMPNHCTKPDLASKLENIIEYIKSL) is the bHLH domain.

The protein belongs to the bHLH protein family. In terms of assembly, homodimer.

The protein localises to the nucleus. Its function is as follows. Transcription factor involved in somatic embryogenesis. Acts as a positive regulator of somatic embryo formation. Acts as a positive regulator of ECP63 by targeting its promoter and inducing its expression. This Arabidopsis thaliana (Mouse-ear cress) protein is Transcription factor bHLH109 (BHLH109).